The sequence spans 436 residues: Trigger factor (436 aa).

The region spanning G164 to P249 is the PPIase FKBP-type domain.

It belongs to the FKBP-type PPIase family. Tig subfamily.

The protein localises to the cytoplasm. It catalyses the reaction [protein]-peptidylproline (omega=180) = [protein]-peptidylproline (omega=0). Functionally, involved in protein export. Acts as a chaperone by maintaining the newly synthesized protein in an open conformation. Functions as a peptidyl-prolyl cis-trans isomerase. The chain is Trigger factor from Limosilactobacillus reuteri (strain DSM 20016) (Lactobacillus reuteri).